A 401-amino-acid polypeptide reads, in one-letter code: S-adenosylmethionine synthase (401 aa).

Residue 137–142 (GQGSGD) participates in ATP binding.

This sequence belongs to the AdoMet synthase 2 family. Mg(2+) serves as cofactor.

It carries out the reaction L-methionine + ATP + H2O = S-adenosyl-L-methionine + phosphate + diphosphate. The protein operates within amino-acid biosynthesis; S-adenosyl-L-methionine biosynthesis; S-adenosyl-L-methionine from L-methionine: step 1/1. Catalyzes the formation of S-adenosylmethionine from methionine and ATP. The chain is S-adenosylmethionine synthase from Haloquadratum walsbyi (strain DSM 16790 / HBSQ001).